The primary structure comprises 329 residues: Ficolin-2 (329 aa).

The signal sequence occupies residues 1–29; that stretch reads MELGGAAGALGPSGPLLVCLCFGTLAAQA. One can recognise a Collagen-like domain in the interval 52–111; that stretch reads GCPGLPGAPGLKGETGAAGLKGERGLPGVPGKAGPAGPKGSTGAQGEKGARGEKGESGQL. Residues 64–113 form a disordered region; it reads GETGAAGLKGERGLPGVPGKAGPAGPKGSTGAQGEKGARGEKGESGQLHS. Residues 77 to 90 show a composition bias toward low complexity; sequence LPGVPGKAGPAGPK. Residues 112-329 enclose the Fibrinogen C-terminal domain; that stretch reads HSCATGPRTC…KVSEMKLRLT (218 aa). 2 disulfide bridges follow: C114–C142 and C121–C149. D265, D267, S269, and S271 together coordinate Ca(2+). Cysteines 273 and 286 form a disulfide. N316 carries N-linked (GlcNAc...) asparagine glycosylation.

Belongs to the ficolin lectin family. In terms of assembly, homotrimer. Interacts with elastin. Interacts with MASP1 and MASP2.

It is found in the secreted. Its function is as follows. May function in innate immunity through activation of the lectin complement pathway. Calcium-dependent and GlcNAc-binding lectin. The protein is Ficolin-2 (FCN2) of Bos taurus (Bovine).